Here is a 153-residue protein sequence, read N- to C-terminus: Pro-corazonin (153 aa).

The N-terminal stretch at 1–20 is a signal peptide; the sequence is MLRLLLLPLFLFTLSMACMG. Residue Q21 is modified to Pyrrolidone carboxylic acid. N31 is subject to Asparagine amide. Positions 64–153 are excised as a propeptide; that stretch reads LERCLLQLQH…AVEPNDYGKH (90 aa).

It belongs to the corazonin family. In terms of tissue distribution, expression is restricted to 24 neurons in the larval CNS (8 in the brain and 16 in the ventral nerve cord) and 12-16 neurons in the pars lateralis of the adult brain.

It localises to the secreted. Functionally, cardioactive peptide. Corazonin is probably involved in the physiological regulation of the heart beat. Clock (Clk) and cycle (cyc) proteins negatively regulate Crz transcription in a cell-specific manner. The sequence is that of Pro-corazonin (Crz) from Drosophila virilis (Fruit fly).